The chain runs to 251 residues: Tryptophan synthase alpha chain (251 aa).

Residues Glu-36 and Asp-47 each act as proton acceptor in the active site.

It belongs to the TrpA family. Tetramer of two alpha and two beta chains.

It carries out the reaction (1S,2R)-1-C-(indol-3-yl)glycerol 3-phosphate + L-serine = D-glyceraldehyde 3-phosphate + L-tryptophan + H2O. Its pathway is amino-acid biosynthesis; L-tryptophan biosynthesis; L-tryptophan from chorismate: step 5/5. Functionally, the alpha subunit is responsible for the aldol cleavage of indoleglycerol phosphate to indole and glyceraldehyde 3-phosphate. The sequence is that of Tryptophan synthase alpha chain from Thermococcus kodakarensis (strain ATCC BAA-918 / JCM 12380 / KOD1) (Pyrococcus kodakaraensis (strain KOD1)).